We begin with the raw amino-acid sequence, 375 residues long: Probable neutral protease 2 homolog ARB_05817 (375 aa).

The N-terminal stretch at Met-1–Gly-19 is a signal peptide. Positions Phe-20–Arg-189 are excised as a propeptide. Intrachain disulfides connect Cys-197/Cys-267 and Cys-274/Cys-292. His-317 serves as a coordination point for Zn(2+). The active site involves Glu-318. His-321 and Asp-332 together coordinate Zn(2+).

This sequence belongs to the peptidase M35 family. Zn(2+) is required as a cofactor.

The protein resides in the secreted. It catalyses the reaction Preferential cleavage of bonds with hydrophobic residues in P1'. Also 3-Asn-|-Gln-4 and 8-Gly-|-Ser-9 bonds in insulin B chain.. Probable secreted metalloprotease that shows high activities on basic nuclear substrates such as histone and protamine. May be involved in virulence. This Arthroderma benhamiae (strain ATCC MYA-4681 / CBS 112371) (Trichophyton mentagrophytes) protein is Probable neutral protease 2 homolog ARB_05817.